We begin with the raw amino-acid sequence, 312 residues long: DNA-directed RNA polymerase subunit alpha (312 aa).

The alpha N-terminal domain (alpha-NTD) stretch occupies residues 1-229 (MLQYQIDRID…ELFQPLATVS (229 aa)). Residues 239-312 (EPAAEAQIPL…ISIPQSRTSA (74 aa)) are alpha C-terminal domain (alpha-CTD).

Belongs to the RNA polymerase alpha chain family. As to quaternary structure, in cyanobacteria the RNAP catalytic core is composed of 2 alpha, 1 beta, 1 beta', 1 gamma and 1 omega subunit. When a sigma factor is associated with the core the holoenzyme is formed, which can initiate transcription.

The enzyme catalyses RNA(n) + a ribonucleoside 5'-triphosphate = RNA(n+1) + diphosphate. In terms of biological role, DNA-dependent RNA polymerase catalyzes the transcription of DNA into RNA using the four ribonucleoside triphosphates as substrates. This is DNA-directed RNA polymerase subunit alpha from Prochlorococcus marinus (strain NATL1A).